The sequence spans 37 residues: Large ribosomal subunit protein bL36 (37 aa).

This sequence belongs to the bacterial ribosomal protein bL36 family.

The chain is Large ribosomal subunit protein bL36 from Shewanella woodyi (strain ATCC 51908 / MS32).